The primary structure comprises 279 residues: UTP--glucose-1-phosphate uridylyltransferase (279 aa).

Belongs to the UDPGP type 2 family.

It carries out the reaction alpha-D-glucose 1-phosphate + UTP + H(+) = UDP-alpha-D-glucose + diphosphate. Its function is as follows. May play a role in stationary phase survival. The polypeptide is UTP--glucose-1-phosphate uridylyltransferase (galU) (Pseudomonas aeruginosa (strain ATCC 15692 / DSM 22644 / CIP 104116 / JCM 14847 / LMG 12228 / 1C / PRS 101 / PAO1)).